The primary structure comprises 87 residues: Small ribosomal subunit protein uS17 (87 aa).

It belongs to the universal ribosomal protein uS17 family. Part of the 30S ribosomal subunit.

Its function is as follows. One of the primary rRNA binding proteins, it binds specifically to the 5'-end of 16S ribosomal RNA. The sequence is that of Small ribosomal subunit protein uS17 from Alkalilimnicola ehrlichii (strain ATCC BAA-1101 / DSM 17681 / MLHE-1).